The sequence spans 241 residues: Leucyl/phenylalanyl-tRNA--protein transferase (241 aa).

It belongs to the L/F-transferase family.

It is found in the cytoplasm. It carries out the reaction N-terminal L-lysyl-[protein] + L-leucyl-tRNA(Leu) = N-terminal L-leucyl-L-lysyl-[protein] + tRNA(Leu) + H(+). The enzyme catalyses N-terminal L-arginyl-[protein] + L-leucyl-tRNA(Leu) = N-terminal L-leucyl-L-arginyl-[protein] + tRNA(Leu) + H(+). It catalyses the reaction L-phenylalanyl-tRNA(Phe) + an N-terminal L-alpha-aminoacyl-[protein] = an N-terminal L-phenylalanyl-L-alpha-aminoacyl-[protein] + tRNA(Phe). In terms of biological role, functions in the N-end rule pathway of protein degradation where it conjugates Leu, Phe and, less efficiently, Met from aminoacyl-tRNAs to the N-termini of proteins containing an N-terminal arginine or lysine. This is Leucyl/phenylalanyl-tRNA--protein transferase from Colwellia psychrerythraea (strain 34H / ATCC BAA-681) (Vibrio psychroerythus).